The primary structure comprises 198 residues: Protein GrpE (198 aa).

Belongs to the GrpE family. Homodimer.

The protein resides in the cytoplasm. In terms of biological role, participates actively in the response to hyperosmotic and heat shock by preventing the aggregation of stress-denatured proteins, in association with DnaK and GrpE. It is the nucleotide exchange factor for DnaK and may function as a thermosensor. Unfolded proteins bind initially to DnaJ; upon interaction with the DnaJ-bound protein, DnaK hydrolyzes its bound ATP, resulting in the formation of a stable complex. GrpE releases ADP from DnaK; ATP binding to DnaK triggers the release of the substrate protein, thus completing the reaction cycle. Several rounds of ATP-dependent interactions between DnaJ, DnaK and GrpE are required for fully efficient folding. The sequence is that of Protein GrpE from Vibrio harveyi (Beneckea harveyi).